Here is a 706-residue protein sequence, read N- to C-terminus: Elongation factor G (706 aa).

The tr-type G domain occupies 8-295; it reads ERYRNFGIMA…AVIDYLPSPL (288 aa). Residues 17–24, 92–96, and 146–149 contribute to the GTP site; these read AHIDAGKT, DTPGH, and NKMD.

The protein belongs to the TRAFAC class translation factor GTPase superfamily. Classic translation factor GTPase family. EF-G/EF-2 subfamily.

The protein resides in the cytoplasm. Its function is as follows. Catalyzes the GTP-dependent ribosomal translocation step during translation elongation. During this step, the ribosome changes from the pre-translocational (PRE) to the post-translocational (POST) state as the newly formed A-site-bound peptidyl-tRNA and P-site-bound deacylated tRNA move to the P and E sites, respectively. Catalyzes the coordinated movement of the two tRNA molecules, the mRNA and conformational changes in the ribosome. The polypeptide is Elongation factor G (Jannaschia sp. (strain CCS1)).